We begin with the raw amino-acid sequence, 1051 residues long: Putative transcription factor SEF1 (1051 aa).

Positions Met-1–Ala-10 are enriched in basic and acidic residues. 2 disordered regions span residues Met-1–Ser-54 and Gly-67–Thr-90. The segment covering Glu-11–Ser-21 has biased composition (low complexity). Residues Cys-92–Cys-122 constitute a DNA-binding region (zn(2)-C6 fungal-type). Low complexity predominate over residues Ser-206–Ser-218. 3 disordered regions span residues Ser-206 to Ser-227, Glu-738 to Arg-759, and Ala-927 to Pro-968.

The protein localises to the nucleus. In terms of biological role, putative transcription factor. This Eremothecium gossypii (strain ATCC 10895 / CBS 109.51 / FGSC 9923 / NRRL Y-1056) (Yeast) protein is Putative transcription factor SEF1 (SEF1).